A 79-amino-acid polypeptide reads, in one-letter code: MATWLAIVLIVLALILGLVGGFFLARKYMMDYLKKNPPINEEMLRMMMMQMGQKPSQKKINQMMTMMNKNQQDQLKKSK.

A helical membrane pass occupies residues 4 to 24; it reads WLAIVLIVLALILGLVGGFFL.

It belongs to the UPF0154 family.

Its subcellular location is the membrane. This Staphylococcus saprophyticus subsp. saprophyticus (strain ATCC 15305 / DSM 20229 / NCIMB 8711 / NCTC 7292 / S-41) protein is UPF0154 protein SSP1415.